The following is a 408-amino-acid chain: NADH-quinone oxidoreductase subunit D (408 aa).

This sequence belongs to the complex I 49 kDa subunit family. As to quaternary structure, NDH-1 is composed of 14 different subunits. Subunits NuoB, C, D, E, F, and G constitute the peripheral sector of the complex.

The protein localises to the cell inner membrane. The enzyme catalyses a quinone + NADH + 5 H(+)(in) = a quinol + NAD(+) + 4 H(+)(out). Functionally, NDH-1 shuttles electrons from NADH, via FMN and iron-sulfur (Fe-S) centers, to quinones in the respiratory chain. The immediate electron acceptor for the enzyme in this species is believed to be ubiquinone. Couples the redox reaction to proton translocation (for every two electrons transferred, four hydrogen ions are translocated across the cytoplasmic membrane), and thus conserves the redox energy in a proton gradient. The protein is NADH-quinone oxidoreductase subunit D of Wolinella succinogenes (strain ATCC 29543 / DSM 1740 / CCUG 13145 / JCM 31913 / LMG 7466 / NCTC 11488 / FDC 602W) (Vibrio succinogenes).